We begin with the raw amino-acid sequence, 568 residues long: Periplasmic trehalase (568 aa).

The N-terminal stretch at 1-38 (MPHAPARSGDAMSAAAPPCCTSLLGLSLSMFVAPCALA) is a signal peptide. Substrate is bound by residues R169, 176–177 (WD), N213, 222–224 (RSQ), 294–296 (RPE), and G327. Catalysis depends on proton donor/acceptor residues D329 and E511. E526 serves as a coordination point for substrate.

This sequence belongs to the glycosyl hydrolase 37 family.

It is found in the periplasm. The catalysed reaction is alpha,alpha-trehalose + H2O = alpha-D-glucose + beta-D-glucose. Provides the cells with the ability to utilize trehalose at high osmolarity by splitting it into glucose molecules that can subsequently be taken up by the phosphotransferase-mediated uptake system. The sequence is that of Periplasmic trehalase from Xanthomonas campestris pv. campestris (strain B100).